The primary structure comprises 152 residues: Transcriptional regulator MraZ (152 aa).

SpoVT-AbrB domains are found at residues 5–52 (ATLV…PLPE) and 81–124 (ASEC…DETT).

It belongs to the MraZ family. In terms of assembly, forms oligomers.

The protein localises to the cytoplasm. It is found in the nucleoid. Functionally, negatively regulates its own expression and that of the subsequent genes in the proximal part of the division and cell wall (dcw) gene cluster. Acts by binding directly to DNA. May also regulate the expression of genes outside the dcw cluster. This chain is Transcriptional regulator MraZ, found in Klebsiella pneumoniae subsp. pneumoniae (strain ATCC 700721 / MGH 78578).